The sequence spans 280 residues: Aspartate/glutamate leucyltransferase (280 aa).

This sequence belongs to the R-transferase family. Bpt subfamily.

It localises to the cytoplasm. The catalysed reaction is N-terminal L-glutamyl-[protein] + L-leucyl-tRNA(Leu) = N-terminal L-leucyl-L-glutamyl-[protein] + tRNA(Leu) + H(+). It catalyses the reaction N-terminal L-aspartyl-[protein] + L-leucyl-tRNA(Leu) = N-terminal L-leucyl-L-aspartyl-[protein] + tRNA(Leu) + H(+). Functions in the N-end rule pathway of protein degradation where it conjugates Leu from its aminoacyl-tRNA to the N-termini of proteins containing an N-terminal aspartate or glutamate. This chain is Aspartate/glutamate leucyltransferase, found in Cereibacter sphaeroides (strain ATCC 17023 / DSM 158 / JCM 6121 / CCUG 31486 / LMG 2827 / NBRC 12203 / NCIMB 8253 / ATH 2.4.1.) (Rhodobacter sphaeroides).